Consider the following 140-residue polypeptide: Ribosome maturation factor RimP (140 aa).

This sequence belongs to the RimP family.

It is found in the cytoplasm. In terms of biological role, required for maturation of 30S ribosomal subunits. This is Ribosome maturation factor RimP from Campylobacter jejuni subsp. jejuni serotype O:6 (strain 81116 / NCTC 11828).